We begin with the raw amino-acid sequence, 319 residues long: MKSKAKVAIIGPGNIGTDLMIKVMRHGTHIEMGAMIGVDPKSDGLARAQRMGVAISSDGIDGLLALDVFKEIDIVFDATSAGAHKRHNDVLQAHGVQVIDLTPAAIGPYVIPAINLESENAPNMNMVTCGGQATIPMVAAISRVTKVHYAEIVASISSKSAGPGTRANIDEFTETTRKAIEQLGGASRGKAIIILNPAEPPLIMRDTVFALSDPADQGKIEDSIAQMVASVQAYVPGYRLKQKVQFDVITADKPLNVPGVGLKHGLKTSVFLEVEGAAHYLPSYAGNLDIMTSAALACGDMMARRRMAAGIARGHKEAV.

Cysteine 129 functions as the Acyl-thioester intermediate in the catalytic mechanism. Residues serine 160–asparagine 168 and asparagine 287 each bind NAD(+).

The protein belongs to the acetaldehyde dehydrogenase family.

The catalysed reaction is acetaldehyde + NAD(+) + CoA = acetyl-CoA + NADH + H(+). In Burkholderia lata (strain ATCC 17760 / DSM 23089 / LMG 22485 / NCIMB 9086 / R18194 / 383), this protein is Acetaldehyde dehydrogenase 1.